A 76-amino-acid polypeptide reads, in one-letter code: uncharacterized protein (76 aa).

The next 2 helical transmembrane spans lie at 16–33 (FAFT…GAVL) and 45–61 (TMFL…FFCA).

Its subcellular location is the cell membrane. This is an uncharacterized protein from Bacillus subtilis (strain 168).